Reading from the N-terminus, the 135-residue chain is Class I hydrophobin 15 (135 aa).

The first 21 residues, 1-21 (MFAKSATIAIVLAALAGFSAA), serve as a signal peptide directing secretion. Disulfide bonds link Cys50–Cys113, Cys57–Cys107, Cys58–Cys97, and Cys114–Cys127. Asn131 is a glycosylation site (N-linked (GlcNAc...) asparagine).

The protein belongs to the fungal hydrophobin family. As to quaternary structure, self-assembles to form functional amyloid fibrils called rodlets. Self-assembly into fibrillar rodlets occurs spontaneously at hydrophobic:hydrophilic interfaces and the rodlets further associate laterally to form amphipathic monolayers.

Its subcellular location is the secreted. It localises to the cell wall. Its function is as follows. Aerial growth, conidiation, and dispersal of filamentous fungi in the environment rely upon a capability of their secreting small amphipathic proteins called hydrophobins (HPBs) with low sequence identity. Class I can self-assemble into an outermost layer of rodlet bundles on aerial cell surfaces, conferring cellular hydrophobicity that supports fungal growth, development and dispersal; whereas Class II form highly ordered films at water-air interfaces through intermolecular interactions but contribute nothing to the rodlet structure. The sequence is that of Class I hydrophobin 15 from Pleurotus ostreatus (strain PC15) (Oyster mushroom).